Consider the following 277-residue polypeptide: Odontogenic ameloblast-associated protein (277 aa).

Residues 1-15 (MRTLILLGILGATMS) form the signal peptide. The segment at 103 to 124 (TQAGQLDPSQPQTPQQTQRGPK) is disordered. Residue Thr115 is glycosylated (O-linked (GalNAc...) threonine). An interaction with ARHGEF5 region spans residues 127–129 (MPS). Thr208, Thr248, and Thr271 each carry an O-linked (GalNAc...) threonine glycan.

The protein belongs to the ODAM family. In terms of assembly, interacts (via C-terminus) with ARHGEF5. O-glycosylated.

The protein resides in the secreted. It is found in the cytoplasm. It localises to the nucleus. In terms of biological role, tooth-associated epithelia protein that probably plays a role in odontogenesis, the complex process that results in the initiation and generation of the tooth. May be incorporated in the enamel matrix at the end of mineralization process. Involved in the induction of RHOA activity via interaction with ARHGEF and expression of downstream factors such as ROCK. Plays a role in attachment of the junctional epithelium to the tooth surface. The sequence is that of Odontogenic ameloblast-associated protein (ODAM) from Bos taurus (Bovine).